The following is a 219-amino-acid chain: Protein-L-isoaspartate O-methyltransferase (219 aa).

Residue S60 is part of the active site.

This sequence belongs to the methyltransferase superfamily. L-isoaspartyl/D-aspartyl protein methyltransferase family.

The protein resides in the cytoplasm. The catalysed reaction is [protein]-L-isoaspartate + S-adenosyl-L-methionine = [protein]-L-isoaspartate alpha-methyl ester + S-adenosyl-L-homocysteine. Catalyzes the methyl esterification of L-isoaspartyl residues in peptides and proteins that result from spontaneous decomposition of normal L-aspartyl and L-asparaginyl residues. It plays a role in the repair and/or degradation of damaged proteins. This chain is Protein-L-isoaspartate O-methyltransferase, found in Rhodospirillum rubrum (strain ATCC 11170 / ATH 1.1.1 / DSM 467 / LMG 4362 / NCIMB 8255 / S1).